We begin with the raw amino-acid sequence, 122 residues long: Large ribosomal subunit protein uL14c (122 aa).

It belongs to the universal ribosomal protein uL14 family. As to quaternary structure, part of the 50S ribosomal subunit.

It is found in the plastid. Binds to 23S rRNA. This is Large ribosomal subunit protein uL14c from Cuscuta exaltata (Tall dodder).